Reading from the N-terminus, the 503-residue chain is Glutamate--tRNA ligase (503 aa).

The 'HIGH' region motif lies at 15–25; it reads PSPTGHLHVGG. The 'KMSKS' region motif lies at 262–266; that stretch reads KLSKR. Lysine 265 contributes to the ATP binding site.

It belongs to the class-I aminoacyl-tRNA synthetase family. Glutamate--tRNA ligase type 1 subfamily. In terms of assembly, monomer.

Its subcellular location is the cytoplasm. It carries out the reaction tRNA(Glu) + L-glutamate + ATP = L-glutamyl-tRNA(Glu) + AMP + diphosphate. In terms of biological role, catalyzes the attachment of glutamate to tRNA(Glu) in a two-step reaction: glutamate is first activated by ATP to form Glu-AMP and then transferred to the acceptor end of tRNA(Glu). The protein is Glutamate--tRNA ligase of Chlorobium phaeobacteroides (strain BS1).